The primary structure comprises 119 residues: Beta-2-microglobulin (119 aa).

The N-terminal stretch at 1-20 (MACSVVVALLALLSLSGLEA) is a signal peptide. The Ig-like C1-type domain maps to 25–114 (PKIQVYSRHP…VTFSTPKTVK (90 aa)). A disulfide bond links Cys-45 and Cys-100.

It belongs to the beta-2-microglobulin family. In terms of assembly, heterodimer of an alpha chain and a beta chain. Beta-2-microglobulin is the beta-chain of major histocompatibility complex class I molecules.

It localises to the secreted. In terms of biological role, component of the class I major histocompatibility complex (MHC). Involved in the presentation of peptide antigens to the immune system. The chain is Beta-2-microglobulin (B2M) from Mico emiliae (Emilia's marmoset).